The chain runs to 58 residues: Small ribosomal subunit protein bS21 (58 aa).

The tract at residues 30 to 58 (SEVRKREHYEKPSVKRKKKSEAARKRKFK) is disordered. The segment covering 31-42 (EVRKREHYEKPS) has biased composition (basic and acidic residues). The span at 43-58 (VKRKKKSEAARKRKFK) shows a compositional bias: basic residues.

The protein belongs to the bacterial ribosomal protein bS21 family.

The chain is Small ribosomal subunit protein bS21 from Clostridium perfringens (strain ATCC 13124 / DSM 756 / JCM 1290 / NCIMB 6125 / NCTC 8237 / Type A).